Reading from the N-terminus, the 270-residue chain is UPF0162 protein PA3419 (270 aa).

Belongs to the UPF0162 family.

The chain is UPF0162 protein PA3419 from Pseudomonas aeruginosa (strain ATCC 15692 / DSM 22644 / CIP 104116 / JCM 14847 / LMG 12228 / 1C / PRS 101 / PAO1).